The primary structure comprises 181 residues: NADH-quinone oxidoreductase subunit 2 (181 aa).

Cys-83, Ser-87, Cys-88, Cys-124, and Cys-128 together coordinate [2Fe-2S] cluster. A disulfide bridge connects residues Cys-144 and Cys-172.

Belongs to the complex I 24 kDa subunit family. As to quaternary structure, NDH-1 is composed of 15 different subunits, Nqo1 to Nqo15. The complex has a L-shaped structure, with the hydrophobic arm (subunits Nqo7, Nqo8 and Nqo10 to Nqo14) embedded in the membrane and the hydrophilic peripheral arm (subunits Nqo1 to Nqo6, Nqo9 and Nqo15) protruding into the bacterial cytoplasm. The hydrophilic domain contains all the redox centers. It depends on [2Fe-2S] cluster as a cofactor.

The protein resides in the cell membrane. The enzyme catalyses a quinone + NADH + 5 H(+)(in) = a quinol + NAD(+) + 4 H(+)(out). In terms of biological role, NDH-1 shuttles electrons from NADH, via FMN and iron-sulfur (Fe-S) centers, to quinones in the respiratory chain. The immediate electron acceptor for the enzyme in this species is menaquinone. Couples the redox reaction to proton translocation (for every two electrons transferred, four hydrogen ions are translocated across the cytoplasmic membrane), and thus conserves the redox energy in a proton gradient required for the synthesis of ATP. The protein is NADH-quinone oxidoreductase subunit 2 (nqo2) of Thermus thermophilus (strain ATCC 27634 / DSM 579 / HB8).